Consider the following 306-residue polypeptide: Meiotically up-regulated gene 73 protein (306 aa).

Transmembrane regions (helical) follow at residues 28 to 48 (YWAV…VSIF), 59 to 79 (FFSI…CNYG), 103 to 123 (YIQW…TVGV), 125 to 145 (ILEI…LLAA), 154 to 174 (WAYY…SVVL), 190 to 210 (FLWS…CWIL), and 224 to 244 (IFYS…FSWM).

The protein belongs to the archaeal/bacterial/fungal opsin family.

The protein localises to the membrane. In terms of biological role, has a role in meiosis. In Schizosaccharomyces pombe (strain 972 / ATCC 24843) (Fission yeast), this protein is Meiotically up-regulated gene 73 protein (mug73).